The primary structure comprises 504 residues: MKAMLLALTGGILLPFAFAPFGYALVAPLSLALLFRVWLNASPSKAALYGYLFGLGQFGIGVSWVFVSMYEYGGSDVFSAAGLTALFVAYLALFPALAGWLGVKAGGGSILVRTLLVFPAAWVVTEWLRGWLFSGFPWLQIGYSQTDTGLRSIAPVFGVFGVGWLLAVLAGLLLSAWLLDRRGRRFALLGAAVVLVGSTQFAKVQWTHPAGDPIRVTLLQGNVPQDQKWRPEAKTTTVQMYVDMTRQHWDSRLIIWPETAVPAFYQQVAESFLAPLEAEARQHGVDVLVGVPYYEAQGNRYYNALVTLGAKPGRYFKRHLVPFGEFLPLRPVLAFVLDILQIPLADFTAGAHRQTLLQAAGYPLIASICYEDIFGQESLTGLPEGAYLVNVTNDAWFGDSFAPHQHWQKARMRALETGRYMLRATNTGVTGIIDAGGRPVAVAPMFEREALTGMMQPMAGATPYALWGDWPAIGLCAGIVGICFARRRRNASSHQGRQAEPGRN.

The next 6 membrane-spanning stretches (helical) occupy residues 6 to 26, 47 to 67, 83 to 103, 105 to 125, 153 to 173, and 186 to 206; these read LALT…YALV, ALYG…WVFV, LTAL…WLGV, AGGG…WVVT, IAPV…AGLL, and FALL…KVQW. The CN hydrolase domain occupies 219–457; sequence LQGNVPQDQK…REALTGMMQP (239 aa). Glutamate 258 functions as the Proton acceptor in the catalytic mechanism. The active site involves lysine 317. Cysteine 369 serves as the catalytic Nucleophile. Residues 465–485 form a helical membrane-spanning segment; the sequence is ALWGDWPAIGLCAGIVGICFA.

This sequence belongs to the CN hydrolase family. Apolipoprotein N-acyltransferase subfamily.

It localises to the cell inner membrane. The catalysed reaction is N-terminal S-1,2-diacyl-sn-glyceryl-L-cysteinyl-[lipoprotein] + a glycerophospholipid = N-acyl-S-1,2-diacyl-sn-glyceryl-L-cysteinyl-[lipoprotein] + a 2-acyl-sn-glycero-3-phospholipid + H(+). Its pathway is protein modification; lipoprotein biosynthesis (N-acyl transfer). Functionally, catalyzes the phospholipid dependent N-acylation of the N-terminal cysteine of apolipoprotein, the last step in lipoprotein maturation. This Methylococcus capsulatus (strain ATCC 33009 / NCIMB 11132 / Bath) protein is Apolipoprotein N-acyltransferase.